The chain runs to 510 residues: MKLAHWMYAGPAHIGTLRVASSFKNVHAIMHAPLGDDYFNVMRSMLERERNFTPATASIVDRHVLARGSRKRVVDNILRKDKEESPDLIILTPTCTSSILQEDLKNFVDRASIISDCNVIFADVDHYQVNEIQAADRTLEQVVRYYLDKSHTLDQFVTDAPSVNIIGILTLGFHNRHDCRELRRLLKDLDIRINQIIPEGGSVEDPKNLPKARFNLIPYREVGLMTAMYLNKEFGMPYVSTTPMGAVDMAECIRQIKKSLDILAAPILSSKRVDYESYIDGQTRFVSQAAWFSRSIDCQNFTGKETVVFGDATHAASITKILAREMGIRVSCTGTYCKHDAEWFKEQIKDFCDEMIITDDHAEVGDIIARVEPSAIFGTQMERHIGKRLEIPCGVISAPAHIQNFSLGYRPFLGYEGTNQIADLVYNSFALGMEDHLLEIFCGHDTKEIMTKSLSTDISPIWDPESRQELGKIPRFVRDEVKINTEKFARQKGLLNVTVEVMHAAKEALS.

Asp36 serves as a coordination point for [4Fe-4S] cluster. Asp297 acts as the Proton donor in catalysis. 432–433 (GM) is a binding site for substrate.

The protein belongs to the ChlB/BchB/BchZ family. Protochlorophyllide reductase is composed of three subunits; ChlL, ChlN and ChlB. Forms a heterotetramer of two ChlB and two ChlN subunits. Requires [4Fe-4S] cluster as cofactor.

The protein resides in the plastid. It localises to the chloroplast. It catalyses the reaction chlorophyllide a + oxidized 2[4Fe-4S]-[ferredoxin] + 2 ADP + 2 phosphate = protochlorophyllide a + reduced 2[4Fe-4S]-[ferredoxin] + 2 ATP + 2 H2O. It functions in the pathway porphyrin-containing compound metabolism; chlorophyll biosynthesis (light-independent). Component of the dark-operative protochlorophyllide reductase (DPOR) that uses Mg-ATP and reduced ferredoxin to reduce ring D of protochlorophyllide (Pchlide) to form chlorophyllide a (Chlide). This reaction is light-independent. The NB-protein (ChlN-ChlB) is the catalytic component of the complex. The polypeptide is Light-independent protochlorophyllide reductase subunit B (Pinus koraiensis (Korean pine)).